The primary structure comprises 634 residues: Transcription termination factor FttA (634 aa).

The tract at residues 4–69 is KHa; it reads EEVLENIRKE…ISIRPDPSVL (66 aa). The interval 70–137 is KHb; it reads VEPEIAKQKI…WAPKPVRTPP (68 aa). The tract at residues 179–381 is metallo-beta-lactamase N-terminus; that stretch reads WIRVSFLGGA…LIIESTYGAY (203 aa). His-240, His-242, Asp-244, His-245, His-327, and Asp-350 together coordinate Zn(2+). The segment at 382–575 is beta-Casp; the sequence is DDVLPEREEA…LQVYTIEGFS (194 aa). Residues 576–634 are metallo-beta-lactamase C-terminus; it reads GHSDRKQLIKYIRRLKPSPEKIIMVHGEESKCLDFADTVRRLFKKQTYVPMNLDAIRVK. Zn(2+) is bound at residue His-601.

The protein belongs to the metallo-beta-lactamase superfamily. RNA-metabolizing metallo-beta-lactamase-like family. FttA subfamily. As to quaternary structure, homodimer. Interacts with RNA polymerase (RNAP), interacts with the Spt4-Spt5 complex. The cofactor is Zn(2+).

With respect to regulation, optimal NaCl concentration is 100 mM for nuclease activity on RNA. Terminates transcription on the whole genome. Termination is linked to FttA-mediated RNA cleavage and does not require NTP hydrolysis. Cleaves endonucleolytically at the RNA exit channel of RNA polymerase (RNAP); the 5'-3' exonuclease activity of this protein degrades the nascent RNA released from RNAP. In terms of biological role, an endoribonuclease with no apparent exonuclease activity, has low activity on single-stranded DNA (endodeoxyribonuclease, endoDNase). The sequence is that of Transcription termination factor FttA from Methanocaldococcus jannaschii (strain ATCC 43067 / DSM 2661 / JAL-1 / JCM 10045 / NBRC 100440) (Methanococcus jannaschii).